The primary structure comprises 144 residues: 3-hydroxyacyl-[acyl-carrier-protein] dehydratase FabZ (144 aa).

H48 is a catalytic residue.

Belongs to the thioester dehydratase family. FabZ subfamily.

It localises to the cytoplasm. The enzyme catalyses a (3R)-hydroxyacyl-[ACP] = a (2E)-enoyl-[ACP] + H2O. In terms of biological role, involved in unsaturated fatty acids biosynthesis. Catalyzes the dehydration of short chain beta-hydroxyacyl-ACPs and long chain saturated and unsaturated beta-hydroxyacyl-ACPs. This Bacillus cytotoxicus (strain DSM 22905 / CIP 110041 / 391-98 / NVH 391-98) protein is 3-hydroxyacyl-[acyl-carrier-protein] dehydratase FabZ.